Here is a 629-residue protein sequence, read N- to C-terminus: Chaperone protein HtpG (629 aa).

The a; substrate-binding stretch occupies residues 1–343; that stretch reads MQKQTLSFQA…SSDLPLNVSR (343 aa). The segment at 344–558 is b; that stretch reads ELLQESRAVK…DGDMSTQLAR (215 aa). The segment at 559-629 is c; the sequence is MLKQAGQTVP…YVRRVNALLV (71 aa).

It belongs to the heat shock protein 90 family. In terms of assembly, homodimer.

The protein resides in the cytoplasm. Functionally, molecular chaperone. Has ATPase activity. This is Chaperone protein HtpG from Polaromonas naphthalenivorans (strain CJ2).